The chain runs to 117 residues: Ribonuclease P protein component (117 aa).

Belongs to the RnpA family. Consists of a catalytic RNA component (M1 or rnpB) and a protein subunit.

It carries out the reaction Endonucleolytic cleavage of RNA, removing 5'-extranucleotides from tRNA precursor.. In terms of biological role, RNaseP catalyzes the removal of the 5'-leader sequence from pre-tRNA to produce the mature 5'-terminus. It can also cleave other RNA substrates such as 4.5S RNA. The protein component plays an auxiliary but essential role in vivo by binding to the 5'-leader sequence and broadening the substrate specificity of the ribozyme. This Limosilactobacillus reuteri subsp. reuteri (strain JCM 1112) (Lactobacillus reuteri) protein is Ribonuclease P protein component.